A 496-amino-acid polypeptide reads, in one-letter code: Probable cytosol aminopeptidase (496 aa).

Mn(2+) is bound by residues Lys-266 and Asp-271. The active site involves Lys-278. The Mn(2+) site is built by Asp-289, Asp-348, and Glu-350. Arg-352 is a catalytic residue.

Belongs to the peptidase M17 family. Mn(2+) is required as a cofactor.

Its subcellular location is the cytoplasm. The enzyme catalyses Release of an N-terminal amino acid, Xaa-|-Yaa-, in which Xaa is preferably Leu, but may be other amino acids including Pro although not Arg or Lys, and Yaa may be Pro. Amino acid amides and methyl esters are also readily hydrolyzed, but rates on arylamides are exceedingly low.. It carries out the reaction Release of an N-terminal amino acid, preferentially leucine, but not glutamic or aspartic acids.. Its function is as follows. Presumably involved in the processing and regular turnover of intracellular proteins. Catalyzes the removal of unsubstituted N-terminal amino acids from various peptides. This is Probable cytosol aminopeptidase from Pseudomonas fluorescens (strain Pf0-1).